Here is a 147-residue protein sequence, read N- to C-terminus: UPF0735 ACT domain-containing protein GTNG_2535 (147 aa).

One can recognise an ACT domain in the interval 69-144; sequence TLFFHLEDRS…FVEKVEIVGS (76 aa).

It belongs to the UPF0735 family.

This is UPF0735 ACT domain-containing protein GTNG_2535 from Geobacillus thermodenitrificans (strain NG80-2).